The primary structure comprises 80 residues: Cell division protein ZapB (80 aa).

A coiled-coil region spans residues 3–80 (FEVLEQLEAK…NLLGKMDDVE (78 aa)).

The protein belongs to the ZapB family. As to quaternary structure, homodimer. The ends of the coiled-coil dimer bind to each other, forming polymers. Interacts with FtsZ.

Its subcellular location is the cytoplasm. Functionally, non-essential, abundant cell division factor that is required for proper Z-ring formation. It is recruited early to the divisome by direct interaction with FtsZ, stimulating Z-ring assembly and thereby promoting cell division earlier in the cell cycle. Its recruitment to the Z-ring requires functional FtsA or ZipA. The sequence is that of Cell division protein ZapB from Vibrio atlanticus (strain LGP32) (Vibrio splendidus (strain Mel32)).